Here is an 832-residue protein sequence, read N- to C-terminus: Translation initiation factor IF-2 (832 aa).

Residues 1-244 (MSDTDGKKTL…KAMGGSQERE (244 aa)) are disordered. Over residues 18–27 (TGQVKQSFSH) the composition is skewed to polar residues. Positions 81–141 (KANESEEAER…EARKKAEADA (61 aa)) are enriched in basic and acidic residues. Residues 142–171 (SSKPAAARSKADDPATMDPAAAQAAEARGA) show a composition bias toward low complexity. Basic and acidic residues-rich tracts occupy residues 178–201 (PRKE…DDRR) and 227–244 (RKQE…QERE). Residues 329 to 497 (PRPPVITVMG…SIALQAEILE (169 aa)) form the tr-type G domain. The segment at 338-345 (GHVDHGKT) is G1. 338-345 (GHVDHGKT) lines the GTP pocket. The tract at residues 363-367 (GITQH) is G2. The interval 385–388 (DTPG) is G3. GTP contacts are provided by residues 385-389 (DTPGH) and 439-442 (NKID). The interval 439–442 (NKID) is G4. Residues 475–477 (SAI) are G5.

Belongs to the TRAFAC class translation factor GTPase superfamily. Classic translation factor GTPase family. IF-2 subfamily.

It localises to the cytoplasm. Its function is as follows. One of the essential components for the initiation of protein synthesis. Protects formylmethionyl-tRNA from spontaneous hydrolysis and promotes its binding to the 30S ribosomal subunits. Also involved in the hydrolysis of GTP during the formation of the 70S ribosomal complex. This chain is Translation initiation factor IF-2, found in Dinoroseobacter shibae (strain DSM 16493 / NCIMB 14021 / DFL 12).